The following is a 216-amino-acid chain: Transmembrane emp24 domain-containing protein eca (216 aa).

A signal peptide spans 1 to 20 (MRDQILSLALLLCVLHSACG). The Lumenal segment spans residues 21-182 (LYFHISETER…FRHTSESTNS (162 aa)). One can recognise a GOLD domain in the interval 30–126 (RKCFIEEVPD…QLRVHLDIQV (97 aa)). The stretch at 134–164 (ANVAQKEKLTELQLRIRQLLDQVEQITKEQN) forms a coiled coil. A helical transmembrane segment spans residues 183-203 (RVLWWSLAQTVVLVCMGFWQM). Topologically, residues 204 to 216 (RHLKSFFEAKKLV) are cytoplasmic. The short motif at 213–216 (KKLV) is the Prevents secretion from ER element.

This sequence belongs to the EMP24/GP25L family.

The protein localises to the endoplasmic reticulum membrane. In terms of biological role, eca and bai are essential, though not redundant, for dorsoventral patterning of the embryo. Specifically required during early embryogenesis for the activity of maternal tkv, while the zygotic tkv is not affected. Involved in Golgi organization. The polypeptide is Transmembrane emp24 domain-containing protein eca (Drosophila ananassae (Fruit fly)).